The primary structure comprises 331 residues: tRNA (guanine-N(1)-)-methyltransferase (331 aa).

Composition is skewed to low complexity over residues G77–R99 and A107–A134. Residues G77–R137 are disordered. S-adenosyl-L-methionine is bound by residues G169 and L193–L198. The tract at residues W312–A331 is disordered.

Belongs to the RNA methyltransferase TrmD family. In terms of assembly, homodimer.

The protein resides in the cytoplasm. It catalyses the reaction guanosine(37) in tRNA + S-adenosyl-L-methionine = N(1)-methylguanosine(37) in tRNA + S-adenosyl-L-homocysteine + H(+). Its function is as follows. Specifically methylates guanosine-37 in various tRNAs. The sequence is that of tRNA (guanine-N(1)-)-methyltransferase from Kocuria rhizophila (strain ATCC 9341 / DSM 348 / NBRC 103217 / DC2201).